The chain runs to 364 residues: Putative F-box/kelch-repeat protein At1g12170 (364 aa).

The F-box domain maps to 1–50 (MMHVILPWELVEEILYRVPPLSLTRFKIVCKQWNTLFKSKSFVNNHLVRV). Kelch repeat units follow at residues 156 to 205 (SIYN…LNGN) and 328 to 364 (CVYIVRGNALTKIQIVGVDAKNYINHCSYVPSLIPVP).

The chain is Putative F-box/kelch-repeat protein At1g12170 from Arabidopsis thaliana (Mouse-ear cress).